The following is a 33-amino-acid chain: Gastrin (33 aa).

Q1 and Q18 each carry pyrrolidone carboxylic acid. Y28 bears the Sulfotyrosine mark. Residue F33 is modified to Phenylalanine amide.

Belongs to the gastrin/cholecystokinin family.

The protein resides in the secreted. Gastrin stimulates the stomach mucosa to produce and secrete hydrochloric acid and the pancreas to secrete its digestive enzymes. It also stimulates smooth muscle contraction and increases blood circulation and water secretion in the stomach and intestine. The chain is Gastrin (GAST) from Didelphis virginiana (North American opossum).